The following is a 588-amino-acid chain: L-fucose isomerase (588 aa).

Residues glutamate 335 and aspartate 359 each act as proton acceptor in the active site. Positions 335, 359, and 525 each coordinate Mn(2+).

It belongs to the L-fucose isomerase family. The cofactor is Mn(2+).

It localises to the cytoplasm. The catalysed reaction is L-fucose = L-fuculose. It participates in carbohydrate degradation; L-fucose degradation; L-lactaldehyde and glycerone phosphate from L-fucose: step 1/3. In terms of biological role, converts the aldose L-fucose into the corresponding ketose L-fuculose. This is L-fucose isomerase from Streptococcus pneumoniae (strain ATCC 700669 / Spain 23F-1).